We begin with the raw amino-acid sequence, 390 residues long: tRNA(Met) cytidine acetate ligase (390 aa).

Residues 7–20 (VVEYNPFHNGHKLH), G101, N162, and R187 each bind ATP.

This sequence belongs to the TmcAL family.

The protein localises to the cytoplasm. The enzyme catalyses cytidine(34) in elongator tRNA(Met) + acetate + ATP = N(4)-acetylcytidine(34) in elongator tRNA(Met) + AMP + diphosphate. Functionally, catalyzes the formation of N(4)-acetylcytidine (ac(4)C) at the wobble position of elongator tRNA(Met), using acetate and ATP as substrates. First activates an acetate ion to form acetyladenylate (Ac-AMP) and then transfers the acetyl group to tRNA to form ac(4)C34. This chain is tRNA(Met) cytidine acetate ligase, found in Listeria monocytogenes serotype 4b (strain F2365).